The chain runs to 258 residues: Type III pantothenate kinase (258 aa).

6–13 (DVGNTQIF) lines the ATP pocket. 107-110 (GADR) serves as a coordination point for substrate. Residue Asp109 is the Proton acceptor of the active site. Residue Asp130 coordinates K(+). Residue Thr133 participates in ATP binding. Substrate is bound at residue Thr185.

This sequence belongs to the type III pantothenate kinase family. Homodimer. NH4(+) serves as cofactor. K(+) is required as a cofactor.

The protein localises to the cytoplasm. It carries out the reaction (R)-pantothenate + ATP = (R)-4'-phosphopantothenate + ADP + H(+). It functions in the pathway cofactor biosynthesis; coenzyme A biosynthesis; CoA from (R)-pantothenate: step 1/5. In terms of biological role, catalyzes the phosphorylation of pantothenate (Pan), the first step in CoA biosynthesis. The sequence is that of Type III pantothenate kinase from Elusimicrobium minutum (strain Pei191).